The sequence spans 449 residues: Glycine--tRNA ligase (449 aa).

Positions 100 and 158 each coordinate substrate. Residues 190-192 (RNE), 200-205 (FRVREF), 275-276 (EL), and 319-322 (GIER) contribute to the ATP site. 205 to 209 (FEQFE) lines the substrate pocket. 315 to 319 (EPSVG) is a substrate binding site.

This sequence belongs to the class-II aminoacyl-tRNA synthetase family. Homodimer.

The protein localises to the cytoplasm. The catalysed reaction is tRNA(Gly) + glycine + ATP = glycyl-tRNA(Gly) + AMP + diphosphate. In terms of biological role, catalyzes the attachment of glycine to tRNA(Gly). The protein is Glycine--tRNA ligase of Mycoplasma pneumoniae (strain ATCC 29342 / M129 / Subtype 1) (Mycoplasmoides pneumoniae).